The chain runs to 146 residues: Hemoglobin subunit beta (146 aa).

Val-1 bears the N-acetylvaline mark. One can recognise a Globin domain in the interval 2-146 (HLTADEKAAV…VATALAHKYH (145 aa)). Phosphothreonine is present on Thr-12. At Ser-44 the chain carries Phosphoserine. Lys-59 carries the N6-acetyllysine modification. Position 63 (His-63) interacts with heme b. N6-acetyllysine is present on Lys-82. His-92 contacts heme b. Cys-93 carries the post-translational modification S-nitrosocysteine. The residue at position 144 (Lys-144) is an N6-acetyllysine.

This sequence belongs to the globin family. Heterotetramer of two alpha chains and two beta chains. Red blood cells.

Involved in oxygen transport from the lung to the various peripheral tissues. This chain is Hemoglobin subunit beta (HBB), found in Taphozous georgianus (Sharp-nosed tomb bat).